The following is a 464-amino-acid chain: Rab GDP-dissociation inhibitor (464 aa).

Belongs to the Rab GDI family. Interacts with the GDP-bound form of Rab GTPase YPT7.

Its function is as follows. Regulates the GDP/GTP exchange reaction of YPT7 by inhibiting the dissociation of GDP from it, and the subsequent binding of GTP to YTP7. This is Rab GDP-dissociation inhibitor (GDI1) from Pyricularia oryzae (strain 70-15 / ATCC MYA-4617 / FGSC 8958) (Rice blast fungus).